Reading from the N-terminus, the 819-residue chain is Protein kinase C-binding protein NELL2 (819 aa).

The signal sequence occupies residues 1 to 24 (MHAMESRVLLRTFCVILGLEAVWG). N-linked (GlcNAc...) asparagine glycans are attached at residues asparagine 56, asparagine 228, asparagine 296, and asparagine 301. The Laminin G-like domain occupies 58 to 231 (TKAFLFQDSP…AQCPDLNRTC (174 aa)). Residues 275 to 334 (RTCTMKGTTYREFESWTDGCKNCTCLNGTIQCETLVCPAPDCPAKSAPAYVDGKCCKECK) form the VWFC 1 domain. The region spanning 400–442 (GYDFCSEKHTCMENSVCRNLNDRAVCSCRDGFRALREDNAYCE) is the EGF-like 1 domain. Intrachain disulfides connect cysteine 404–cysteine 416, cysteine 410–cysteine 425, and cysteine 427–cysteine 441. 3 residues coordinate Ca(2+): aspartate 443, isoleucine 444, and glutamate 446. The EGF-like 2; calcium-binding domain occupies 443-484 (DIDECAEGRHYCRENTMCVNTPGSFLCICQTGYIRIDDYSCT). Disulfide bonds link cysteine 447–cysteine 460, cysteine 454–cysteine 469, cysteine 471–cysteine 483, cysteine 489–cysteine 502, cysteine 496–cysteine 511, cysteine 513–cysteine 524, cysteine 528–cysteine 538, cysteine 532–cysteine 544, and cysteine 546–cysteine 555. Asparagine 462, threonine 463, and serine 466 together coordinate Ca(2+). The EGF-like 3; calcium-binding domain occupies 485 to 525 (EHDECLTNQHNCDENALCFNTVGGHNCVCKPGYTGNGTTCK). The N-linked (GlcNAc...) asparagine glycan is linked to asparagine 520. In terms of domain architecture, EGF-like 4 spans 526–556 (AFCKDGCRNGGACIAANVCACPQGFTGPSCE). O-linked (GlcNAc...) threonine glycosylation is present at threonine 551. Positions 558, 559, and 561 each coordinate Ca(2+). In terms of domain architecture, EGF-like 5; calcium-binding spans 558 to 604 (DIDECSEGFVQCDSRANCINLPGWYHCECRDGYHDNGMFAPGGESCE). 3 disulfide bridges follow: cysteine 562-cysteine 575, cysteine 569-cysteine 584, and cysteine 586-cysteine 603. Residues asparagine 577, leucine 578, and tryptophan 581 each coordinate Ca(2+). Aspartate 605, isoleucine 606, and glutamate 608 together coordinate Ca(2+). The EGF-like 6; calcium-binding domain occupies 605 to 640 (DIDECGTGRHSCANDTICFNLDGGYDCRCPHGKNCT). Disulfide bonds link cysteine 609–cysteine 622, cysteine 616–cysteine 631, and cysteine 633–cysteine 639. Asparagine 618 is a glycosylation site (N-linked (GlcNAc...) asparagine). The Ca(2+) site is built by asparagine 624, leucine 625, and glycine 628. A glycan (N-linked (GlcNAc...) asparagine) is linked at asparagine 638. VWFC domains follow at residues 641-696 (GDCV…PECD) and 701-759 (SQCL…PRCV).

In terms of assembly, homotrimer. Binds to PRKCB. Interacts with NICOL1; this interaction triggers epididymal differentiation. As to quaternary structure, binds to PRKCB. As to expression, widely expressed. Expressed in cortical astrocytes but not in neuron. Widely expressed in brain. High expression is observed in telencephalic and diencephalic glutamatergic neurons, while no expression is found in GABAergic and GNRH neurons.

Its subcellular location is the secreted. It is found in the cytoplasm. Plays multiple roles In neural tissues, regulates neuronal proliferation, survival, differentiation, polarization, as well as axon guidance and synaptic functions. Plays an important role in axon development during neuronal differentiation through the MAPK intracellular signaling pathway. Via binding to its receptor ROBO3, plays a role in axon guidance, functioning as a repulsive axon guidance cue that contributes to commissural axon guidance to the midline. Required for neuron survival through the modulation of MAPK signaling pathways too. Involved in the regulation of hypothalamic GNRH secretion and the control of puberty. In terms of biological role, epididymal-secreted protein that signals through a ROS1-pathway to regulate the epididymal initial segment (IS) maturation, sperm maturation and male fertility. Its function is as follows. Acts as an endogenous inhibitor of PRKCB in glia. The chain is Protein kinase C-binding protein NELL2 (Nell2) from Rattus norvegicus (Rat).